The sequence spans 311 residues: Vomeronasal type-1 receptor 105 (311 aa).

Topologically, residues 1-17 (MMNKNSRLYTDSNIRNT) are extracellular. The chain crosses the membrane as a helical span at residues 18–38 (FFAEIGIGVSANSLLLLFNIF). The Cytoplasmic portion of the chain corresponds to 39–50 (KLICGQRSRLTD). Residues 51-71 (LPIGLLSLINLLMLLMTAFIA) form a helical membrane-spanning segment. Residues 72–94 (TDTFISWRGWDDIICKSLLYLYR) are Extracellular-facing. A disulfide bridge links cysteine 86 with cysteine 173. A helical transmembrane segment spans residues 95–115 (TFRGLSLCTSCLLSVLQAIIL). The Cytoplasmic portion of the chain corresponds to 116–135 (SPRSSCLAKFKHKPSHHISC). Residues 136-156 (AILSLSVLYMFISSHLLVSII) traverse the membrane as a helical segment. Over 157 to 188 (ATPNLTTNDFIHVTQWCSILPMSYLMQSMFST) the chain is Extracellular. Asparagine 160 carries N-linked (GlcNAc...) asparagine glycosylation. The helical transmembrane segment at 189 to 209 (LLAIRDVFLISLMVLSTWYMV) threads the bilayer. Residues 210 to 239 (ALLCRHRKQTRHLQGTSLSPKASPEQRATR) are Cytoplasmic-facing. A helical transmembrane segment spans residues 240–260 (SILMLMSLFVLMSVFDSIVCS). Residues 261-271 (SRTMYLNDPIS) lie on the Extracellular side of the membrane. Residues 272-292 (YSYQLFMVHIYATVSPFVFIV) form a helical membrane-spanning segment. Topologically, residues 293–311 (TEKHIVNSLRSMCVKVMNV) are cytoplasmic.

The protein belongs to the G-protein coupled receptor 1 family. In terms of tissue distribution, expressed in 1-4% of neurons of the vomeronasal organ. Only one pheromone receptor gene may be expressed in a particular neuron. Not expressed in the main olfactory epithelium.

Its subcellular location is the cell membrane. In terms of biological role, putative pheromone receptor implicated in the regulation of social as well as reproductive behavior. The polypeptide is Vomeronasal type-1 receptor 105 (Vom1r105) (Rattus norvegicus (Rat)).